A 652-amino-acid chain; its full sequence is Protein high chlorophyll fluorescent 107 (652 aa).

Disordered regions lie at residues 1 to 21 (MHFFFVPNSSSSSPSPANTSS) and 78 to 121 (VFSP…EGKK). Residues 1–68 (MHFFFVPNSS…TFSSKNTYLY (68 aa)) constitute a chloroplast transit peptide. The span at 105–121 (PLLENSDKESSEEEGKK) shows a compositional bias: basic and acidic residues. TPR repeat units lie at residues 168-201 (LDLSLYKAKVLARNFRYKDAEKILEKCIAYWPED), 202-235 (GRPYVALGKILSKQSKLAEARILYEKGCQSTQGE), 237-270 (SYIWQCWAVLENRLGNVRRARELFDAATVADKKH), 271-304 (VAAWHGWANLEIKQGNISKARNLLAKGLKFCGRN), 305-338 (EYIYQTLALLEAKAGRYEQARYLFKQATICNSRS), 339-372 (CASWLAWAQLEIQQERYPAARKLFEKAVQASPKN), 374-406 (FAWHVWGVFEAGVGNVERGRKLLKIGHALNPRD), 407-440 (PVLLQSLGLLEYKHSSANLARALLRRASELDPRH), 441-474 (QPVWIAWGWMEWKEGNTTTARELYQRALSIDANT), 478-511 (SRCLQAWGVLEQRAGNLSAARRLFRSSLNINSQS), 543-576 (TEVVDDASWVTGFLDIIDPALDTVKRLLNFGQNN), and 598-631 (QQPESSAGREDIETGSGFNLDVFLRSKLSLDPLK). Positions 585–610 (LRNMNRTKDSQSNQQPESSAGREDIE) are disordered.

In terms of assembly, may form homomultimers. Part of a multi-subunit complex in the range of 60-190 and 600-800 kDa in chloroplast membranes.

It localises to the plastid. Its subcellular location is the chloroplast. It is found in the chloroplast membrane. The protein resides in the chloroplast stroma. Involved, directly or indirectly, in the processing of chloroplast encoded mRNAs. Exhibits sequence-specific RNA binding and RNA remodeling activities, probably leading to the activation of translation of the target gene cluster psbB-psbT-psbH-petB-petD. Blocks 5'-3' and 3'-5' exoribonucleases (e.g. polynucleotide phosphorylase (PNPase), RNase R) in vitro. Necessary for intercistronic RNA processing of the psbH 5' untranslated region or the stabilization of 5' processed psbH RNAs. Also required for the synthesis of psbB. The polypeptide is Protein high chlorophyll fluorescent 107 (Arabidopsis thaliana (Mouse-ear cress)).